The sequence spans 118 residues: Membrane-anchored ubiquitin-fold protein 3 (118 aa).

The Ubiquitin-like domain occupies 7–73; that stretch reads IDIKFRLYDG…LENNKTVGQC (67 aa). The S-palmitoyl cysteine moiety is linked to residue Cys113. A Cysteine methyl ester modification is found at Cys115. A lipid anchor (S-geranylgeranyl cysteine) is attached at Cys115. The propeptide at 116–118 is removed in mature form; it reads TIL.

As to expression, ubiquitous, but three fold higher expression in senescing leaves.

It is found in the cell membrane. Functionally, may serve as docking site to facilitate the association of other proteins to the plasma membrane. The sequence is that of Membrane-anchored ubiquitin-fold protein 3 (MUB3) from Arabidopsis thaliana (Mouse-ear cress).